A 406-amino-acid chain; its full sequence is CinA-like protein (406 aa).

This sequence belongs to the CinA family.

The sequence is that of CinA-like protein from Thermomicrobium roseum (strain ATCC 27502 / DSM 5159 / P-2).